The following is a 386-amino-acid chain: Homoserine O-succinyltransferase (386 aa).

The region spanning 49-358 (NAILICHALS…DAEQGHDSFL (310 aa)) is the AB hydrolase-1 domain. Catalysis depends on Ser156, which acts as the Nucleophile. Arg226 serves as a coordination point for substrate. Catalysis depends on residues Asp321 and His354. Asp355 lines the substrate pocket.

The protein belongs to the AB hydrolase superfamily. MetX family. In terms of assembly, homodimer.

Its subcellular location is the cytoplasm. The catalysed reaction is L-homoserine + succinyl-CoA = O-succinyl-L-homoserine + CoA. The protein operates within amino-acid biosynthesis; L-methionine biosynthesis via de novo pathway; O-succinyl-L-homoserine from L-homoserine: step 1/1. Transfers a succinyl group from succinyl-CoA to L-homoserine, forming succinyl-L-homoserine. In Acinetobacter baumannii (strain SDF), this protein is Homoserine O-succinyltransferase.